Consider the following 360-residue polypeptide: UPF0283 membrane protein Asuc_0957 (360 aa).

The next 3 membrane-spanning stretches (helical) occupy residues 74-94, 102-122, and 215-235; these read VIAVAVLFLGATVAQSVQWLI, WIYFAFAVVGCSVVGLGLSAL, and AVENGIVVAISPLAIVDMLFL.

This sequence belongs to the UPF0283 family.

It is found in the cell inner membrane. This is UPF0283 membrane protein Asuc_0957 from Actinobacillus succinogenes (strain ATCC 55618 / DSM 22257 / CCUG 43843 / 130Z).